Reading from the N-terminus, the 316-residue chain is Transaldolase (316 aa).

The active-site Schiff-base intermediate with substrate is Lys-131.

Belongs to the transaldolase family. Type 1 subfamily. Homodimer.

It is found in the cytoplasm. It carries out the reaction D-sedoheptulose 7-phosphate + D-glyceraldehyde 3-phosphate = D-erythrose 4-phosphate + beta-D-fructose 6-phosphate. Its pathway is carbohydrate degradation; pentose phosphate pathway; D-glyceraldehyde 3-phosphate and beta-D-fructose 6-phosphate from D-ribose 5-phosphate and D-xylulose 5-phosphate (non-oxidative stage): step 2/3. Functionally, transaldolase is important for the balance of metabolites in the pentose-phosphate pathway. This chain is Transaldolase, found in Buchnera aphidicola subsp. Acyrthosiphon pisum (strain 5A).